The sequence spans 47 residues: NADH dehydrogenase [ubiquinone] iron-sulfur protein 2 (47 aa).

It belongs to the complex I 49 kDa subunit family. Complex I is composed of about 45 different subunits. This is a component of the iron-sulfur (IP) fragment of the enzyme.

It localises to the mitochondrion inner membrane. It catalyses the reaction a ubiquinone + NADH + 5 H(+)(in) = a ubiquinol + NAD(+) + 4 H(+)(out). In terms of biological role, core subunit of the mitochondrial membrane respiratory chain NADH dehydrogenase (Complex I) that is believed to belong to the minimal assembly required for catalysis. Complex I functions in the transfer of electrons from NADH to the respiratory chain. The immediate electron acceptor for the enzyme is believed to be ubiquinone. Component of the iron-sulfur (IP) fragment of the enzyme. The chain is NADH dehydrogenase [ubiquinone] iron-sulfur protein 2 (NAD7) from Solanum tuberosum (Potato).